The following is a 152-amino-acid chain: Small ribosomal subunit protein bS16 (152 aa).

Over residues 118–130 (AEKHKAKASEKKA) the composition is skewed to basic and acidic residues. The segment at 118–152 (AEKHKAKASEKKAAAAASADEAGSAAADDAEGSES) is disordered. The segment covering 131 to 144 (AAAASADEAGSAAA) has biased composition (low complexity).

Belongs to the bacterial ribosomal protein bS16 family.

The sequence is that of Small ribosomal subunit protein bS16 from Beutenbergia cavernae (strain ATCC BAA-8 / DSM 12333 / CCUG 43141 / JCM 11478 / NBRC 16432 / NCIMB 13614 / HKI 0122).